Consider the following 314-residue polypeptide: Malate dehydrogenase (314 aa).

Residues 12–17 and Asp-36 contribute to the NAD(+) site; that span reads GAGNIG. Positions 85 and 91 each coordinate substrate. Residues Asn-98 and 121–123 contribute to the NAD(+) site; that span reads VTN. Substrate-binding residues include Asn-123 and Arg-154. Catalysis depends on His-178, which acts as the Proton acceptor.

This sequence belongs to the LDH/MDH superfamily. MDH type 3 family.

The enzyme catalyses (S)-malate + NAD(+) = oxaloacetate + NADH + H(+). Catalyzes the reversible oxidation of malate to oxaloacetate. The protein is Malate dehydrogenase of Wolbachia pipientis subsp. Culex pipiens (strain wPip).